We begin with the raw amino-acid sequence, 316 residues long: ATP synthase gamma chain (316 aa).

This sequence belongs to the ATPase gamma chain family. As to quaternary structure, F-type ATPases have 2 components, CF(1) - the catalytic core - and CF(0) - the membrane proton channel. CF(1) has five subunits: alpha(3), beta(3), gamma(1), delta(1), epsilon(1). CF(0) has three main subunits: a, b and c.

Its subcellular location is the cellular thylakoid membrane. Produces ATP from ADP in the presence of a proton gradient across the membrane. The gamma chain is believed to be important in regulating ATPase activity and the flow of protons through the CF(0) complex. In Prochlorococcus marinus subsp. pastoris (strain CCMP1986 / NIES-2087 / MED4), this protein is ATP synthase gamma chain.